A 259-amino-acid polypeptide reads, in one-letter code: Potassium/proton antiporter CemA (259 aa).

4 consecutive transmembrane segments (helical) span residues 47 to 67 (CLLV…EPWV), 136 to 156 (IITH…YLVM), 184 to 204 (ILLA…ELLI), and 219 to 239 (IISS…KYWI).

This sequence belongs to the CemA family.

It localises to the plastid. It is found in the chloroplast inner membrane. It carries out the reaction K(+)(in) + H(+)(out) = K(+)(out) + H(+)(in). Its function is as follows. Contributes to K(+)/H(+) antiport activity by supporting proton efflux to control proton extrusion and homeostasis in chloroplasts in a light-dependent manner to modulate photosynthesis. Prevents excessive induction of non-photochemical quenching (NPQ) under continuous-light conditions. Indirectly promotes efficient inorganic carbon uptake into chloroplasts. In Welwitschia mirabilis (Tree tumbo), this protein is Potassium/proton antiporter CemA.